Consider the following 216-residue polypeptide: UPF0548 protein (216 aa).

This sequence belongs to the UPF0548 family.

The sequence is that of UPF0548 protein from Dictyostelium discoideum (Social amoeba).